Here is a 547-residue protein sequence, read N- to C-terminus: TBCC domain-containing protein 1 (547 aa).

A C-CAP/cofactor C-like domain is found at P304 to L435.

The protein belongs to the TBCC family.

Its subcellular location is the cytoplasm. It localises to the cytoskeleton. The protein localises to the microtubule organizing center. It is found in the centrosome. The protein resides in the spindle pole. Functionally, may play a role in the regulation of centrosome and Golgi apparatus positioning. This chain is TBCC domain-containing protein 1 (tbccd1), found in Xenopus tropicalis (Western clawed frog).